Consider the following 82-residue polypeptide: Defensin-like protein 208 (82 aa).

The first 29 residues, 1-29 (MAKNLNTVSFTVLLLVLLMASTGILETEA), serve as a signal peptide directing secretion. 3 disulfide bridges follow: Cys-38-Cys-63, Cys-50-Cys-76, and Cys-54-Cys-78.

Belongs to the DEFL family.

It is found in the secreted. The chain is Defensin-like protein 208 from Arabidopsis thaliana (Mouse-ear cress).